Reading from the N-terminus, the 187-residue chain is Small ribosomal subunit protein uS7 (187 aa).

It belongs to the universal ribosomal protein uS7 family. As to quaternary structure, part of the 30S ribosomal subunit.

Functionally, one of the primary rRNA binding proteins, it binds directly to 16S rRNA where it nucleates assembly of the head domain of the 30S subunit. Is located at the subunit interface close to the decoding center. This is Small ribosomal subunit protein uS7 from Picrophilus torridus (strain ATCC 700027 / DSM 9790 / JCM 10055 / NBRC 100828 / KAW 2/3).